A 696-amino-acid chain; its full sequence is Elongation factor G (696 aa).

Residues Asp-8–Leu-282 form the tr-type G domain. GTP-binding positions include Ala-17 to Thr-24, Asp-81 to His-85, and Asn-135 to Asp-138.

This sequence belongs to the TRAFAC class translation factor GTPase superfamily. Classic translation factor GTPase family. EF-G/EF-2 subfamily.

The protein resides in the cytoplasm. In terms of biological role, catalyzes the GTP-dependent ribosomal translocation step during translation elongation. During this step, the ribosome changes from the pre-translocational (PRE) to the post-translocational (POST) state as the newly formed A-site-bound peptidyl-tRNA and P-site-bound deacylated tRNA move to the P and E sites, respectively. Catalyzes the coordinated movement of the two tRNA molecules, the mRNA and conformational changes in the ribosome. This is Elongation factor G from Staphylococcus saprophyticus subsp. saprophyticus (strain ATCC 15305 / DSM 20229 / NCIMB 8711 / NCTC 7292 / S-41).